We begin with the raw amino-acid sequence, 310 residues long: UPF0761 membrane protein VFMJ11_0098 (310 aa).

6 consecutive transmembrane segments (helical) span residues 34–54, 97–117, 136–156, 178–198, 207–227, and 242–262; these read YMAY…LSVL, MTAV…SSID, FSLY…SLAA, LLGW…YLLV, HALI…VGFA, and ALAA…IVLI.

The protein belongs to the UPF0761 family.

The protein resides in the cell inner membrane. This is UPF0761 membrane protein VFMJ11_0098 from Aliivibrio fischeri (strain MJ11) (Vibrio fischeri).